The sequence spans 66 residues: Large ribosomal subunit protein uL29 (66 aa).

The protein belongs to the universal ribosomal protein uL29 family.

The sequence is that of Large ribosomal subunit protein uL29 from Deinococcus deserti (strain DSM 17065 / CIP 109153 / LMG 22923 / VCD115).